A 544-amino-acid polypeptide reads, in one-letter code: Chaperonin GroEL (544 aa).

ATP contacts are provided by residues 30-33 (TLGP), lysine 51, 87-91 (DGTTT), glycine 415, 479-481 (NAA), and aspartate 495.

Belongs to the chaperonin (HSP60) family. Forms a cylinder of 14 subunits composed of two heptameric rings stacked back-to-back. Interacts with the co-chaperonin GroES.

The protein resides in the cytoplasm. The catalysed reaction is ATP + H2O + a folded polypeptide = ADP + phosphate + an unfolded polypeptide.. Together with its co-chaperonin GroES, plays an essential role in assisting protein folding. The GroEL-GroES system forms a nano-cage that allows encapsulation of the non-native substrate proteins and provides a physical environment optimized to promote and accelerate protein folding. This chain is Chaperonin GroEL, found in Acinetobacter baumannii (strain AB307-0294).